Here is a 231-residue protein sequence, read N- to C-terminus: Urease accessory protein UreE (231 aa).

The interval 185–231 (VASPLDEPHGSGLHIHGIHSHGEGHSHGDHDHDHSHSHGDHDHDHKH) is disordered. The span at 204 to 231 (SHGEGHSHGDHDHDHSHSHGDHDHDHKH) shows a compositional bias: basic and acidic residues.

Belongs to the UreE family.

The protein resides in the cytoplasm. Involved in urease metallocenter assembly. Binds nickel. Probably functions as a nickel donor during metallocenter assembly. This Yersinia pseudotuberculosis serotype O:1b (strain IP 31758) protein is Urease accessory protein UreE.